The primary structure comprises 130 residues: Small ribosomal subunit protein uS8 (130 aa).

This sequence belongs to the universal ribosomal protein uS8 family. In terms of assembly, part of the 30S ribosomal subunit.

Functionally, one of the primary rRNA binding proteins, it binds directly to 16S rRNA central domain where it helps coordinate assembly of the platform of the 30S subunit. The protein is Small ribosomal subunit protein uS8 of Haloarcula marismortui (strain ATCC 43049 / DSM 3752 / JCM 8966 / VKM B-1809) (Halobacterium marismortui).